The following is a 331-amino-acid chain: Betaine-homocysteine S-methyltransferase (331 aa).

Residues 3-324 (VNQKWNWDTK…TDVLAIRKYV (322 aa)) form the Hcy-binding domain. Cys-243, Cys-309, and Cys-310 together coordinate Zn(2+).

Belongs to the Betaine-homocysteine S-methyltransferase, BHMT family. The cofactor is Zn(2+).

The enzyme catalyses L-homocysteine + glycine betaine = N,N-dimethylglycine + L-methionine. It functions in the pathway amino-acid biosynthesis; L-methionine biosynthesis via de novo pathway. Its function is as follows. Involved in the regulation of homocysteine metabolism. Converts betaine and homocysteine to dimethylglycine and methionine, respectively. This is Betaine-homocysteine S-methyltransferase from Drosophila melanogaster (Fruit fly).